The sequence spans 290 residues: Shikimate kinase (290 aa).

81 to 91 contacts ATP; sequence PIASGLKSSSA.

Belongs to the GHMP kinase family. Archaeal shikimate kinase subfamily.

It is found in the cytoplasm. It catalyses the reaction shikimate + ATP = 3-phosphoshikimate + ADP + H(+). It functions in the pathway metabolic intermediate biosynthesis; chorismate biosynthesis; chorismate from D-erythrose 4-phosphate and phosphoenolpyruvate: step 5/7. The sequence is that of Shikimate kinase from Methanocella arvoryzae (strain DSM 22066 / NBRC 105507 / MRE50).